Here is a 469-residue protein sequence, read N- to C-terminus: UDP-N-acetylmuramate--L-alanine ligase (469 aa).

119–125 (GTHGKTT) is a binding site for ATP.

This sequence belongs to the MurCDEF family.

It localises to the cytoplasm. The enzyme catalyses UDP-N-acetyl-alpha-D-muramate + L-alanine + ATP = UDP-N-acetyl-alpha-D-muramoyl-L-alanine + ADP + phosphate + H(+). It participates in cell wall biogenesis; peptidoglycan biosynthesis. Cell wall formation. This is UDP-N-acetylmuramate--L-alanine ligase from Ruthia magnifica subsp. Calyptogena magnifica.